The sequence spans 860 residues: Nitrogen regulatory protein areA (860 aa).

The segment covering 1–14 (MDGIHHGGHGRARP) has biased composition (basic residues). 5 disordered regions span residues 1-24 (MDGI…PDFD), 116-159 (KERE…TSDP), 174-193 (EHSS…GSIP), 559-600 (GPPE…RTAS), and 612-658 (LNGS…AGPT). Residues 122–144 (ARASETLSPTPSGIAQMRLSDQP) are compositionally biased toward polar residues. Basic and acidic residues predominate over residues 174-184 (EHSSHPIDRHF). Polar residues predominate over residues 577–587 (ASVSEVRNQNQ). The segment at 660 to 684 (CTNCFTQTTPLWRRNPEGQPLCNAC) adopts a GATA-type zinc-finger fold. The segment at 706-850 (KRNRSSASTL…HNIAGGQGAS (145 aa)) is disordered. Composition is skewed to polar residues over residues 710 to 719 (SSASTLAVGT) and 732 to 746 (IQHA…RMNT). 3 stretches are compositionally biased toward low complexity: residues 747–758 (SESPPSMNGSSS), 766–791 (PIAA…QVAP), and 813–840 (KSAA…NPAN).

It is found in the nucleus. Major nitrogen regulatory protein. The sequence is that of Nitrogen regulatory protein areA (AREA) from Penicillium roqueforti.